Consider the following 208-residue polypeptide: Meiotically up-regulated gene 9 protein (208 aa).

Residues Val-77–Gln-114 form a disordered region.

Its function is as follows. Has a role in meiosis. In Schizosaccharomyces pombe (strain 972 / ATCC 24843) (Fission yeast), this protein is Meiotically up-regulated gene 9 protein (mug9).